A 254-amino-acid polypeptide reads, in one-letter code: MNDLFSLAGKNILITGSAQGIGFLLATGLGKYGAQIIINDITAERAELAVEKLHQEGIQAVAAPFNVTHKHEIDAAVEHIEKDIGPIDVLVNNAGIQRRHPFTEFPEQEWNDVIAVNQTAVFLVSQAVTRHMVERKAGKVINICSMQSELGRDTITPYAASKGAVKMLTRGMCVELARHNIQVNGIAPGYFKTEMTKALVEDEAFTAWLCKRTPAARWGDPQELIGAAVFLSSKASDFVNGHLLFVDGGMLVAV.

Residue 13–37 participates in NADP(+) binding; that stretch reads LITGSAQGIGFLLATGLGKYGAQII. Ser145 is a substrate binding site. The Proton acceptor role is filled by Tyr158.

Belongs to the short-chain dehydrogenases/reductases (SDR) family.

It carries out the reaction D-gluconate + NAD(+) = 5-dehydro-D-gluconate + NADH + H(+). The enzyme catalyses D-gluconate + NADP(+) = 5-dehydro-D-gluconate + NADPH + H(+). It participates in carbohydrate acid metabolism; L-idonate degradation. In terms of biological role, catalyzes the reduction of 5-keto-D-gluconate to D-gluconate, using either NADH or NADPH. Is likely involved in an L-idonate degradation pathway that allows E.coli to utilize L-idonate as the sole carbon and energy source. Is also able to catalyze the reverse reaction in vitro, but the D-gluconate oxidation by the enzyme can only proceed with NAD. The sequence is that of 5-keto-D-gluconate 5-reductase from Escherichia coli O6:H1 (strain CFT073 / ATCC 700928 / UPEC).